The following is a 152-amino-acid chain: uncharacterized protein (152 aa).

The segment at 127–152 (EKEKAERKAEKAKKNKKKSSTKTKKK) is disordered. Residues 136–152 (EKAKKNKKKSSTKTKKK) show a composition bias toward basic residues.

It belongs to the mimivirus R546 family.

This is an uncharacterized protein from Sputnik virophage.